The primary structure comprises 1133 residues: Sterol regulatory element-binding protein 1 (1133 aa).

The transcriptional activation (acidic) stretch occupies residues Met1 to Glu60. Residues Met1 to Arg476 are Cytoplasmic-facing. The short motif at Thr27–Leu35 is the 9aaTAD element. The segment at Leu46 to Leu78 is disordered. A compositionally biased stretch (low complexity) spans Ser68–Leu78. Phosphoserine occurs at positions 97 and 116. The disordered stretch occupies residues Leu131–Thr219. The span at Ser165–Gln180 shows a compositional bias: polar residues. 2 stretches are compositionally biased toward low complexity: residues Pro181–Pro191 and Gln203–Pro217. Residues Gln227 to Cys486 are interaction with LMNA. Residues Glu317–Leu367 enclose the bHLH domain. Phosphoserine; by SIK1 is present on residues Ser331 and Ser332. The leucine-zipper stretch occupies residues Leu367 to Ser388. At Ser390 the chain carries Phosphoserine; by AMPK. Ser396 is subject to Phosphoserine; by SIK1. Residues Val415–Phe456 form a disordered region. Residues Asp425–Pro454 show a composition bias toward low complexity. Ser449 is modified (phosphoserine). Residues Leu477–Gly497 form a helical membrane-spanning segment. At Trp498–Pro535 the chain is on the lumenal side. The chain crosses the membrane as a helical span at residues Leu536–Gly556. Residues Glu557 to Ser1133 lie on the Cytoplasmic side of the membrane. Phosphoserine is present on Ser1046.

This sequence belongs to the SREBP family. In terms of assembly, efficient DNA binding of the soluble transcription factor fragment requires dimerization with another bHLH protein. Interacts with CEBPA, the interaction produces a transcriptional synergy. Interacts with LMNA. Forms a tight complex with SCAP, the SCAP-SREBP complex, in the endoplasmic reticulum membrane and the Golgi apparatus. Interacts with PAQR3; the interaction anchors the SCAP-SREBP complex to the Golgi apparatus in low cholesterol conditions. Post-translationally, processed in the Golgi apparatus, releasing the protein from the membrane. At low cholesterol the SCAP-SREBP complex is recruited into COPII vesicles for export from the endoplasmic reticulum. In the Golgi, complex SREBPs are cleaved sequentially by site-1 (MBTPS1, S1P) and site-2 (MBTPS2, S2P) proteases. The first cleavage by site-1 protease occurs within the luminal loop, the second cleavage by site-2 protease occurs within the first transmembrane domain, releasing the transcription factor from the Golgi membrane. Phosphorylated by AMPK, leading to suppress protein processing and nuclear translocation, and repress target gene expression. Phosphorylation at Ser-396 by SIK1 represses activity possibly by inhibiting DNA-binding. In terms of processing, SCAP-free SREBF1 is ubiquitinated by the BCR(ARMC5) complex, leading to its degradation. Post-translationally, ubiquitinated; the nuclear form has a rapid turnover and is rapidly ubiquitinated and degraded by the proteasome in the nucleus.

Its subcellular location is the endoplasmic reticulum membrane. The protein resides in the golgi apparatus membrane. It is found in the cytoplasmic vesicle. The protein localises to the COPII-coated vesicle membrane. It localises to the nucleus. With respect to regulation, activation by cleavage is down-regulated upon activation of SIRT3-dependent PRKAA1/AMPK-alpha signaling cascade which leads to inhibition of ATP-consuming lipogenesis to restore cellular energy balance. Its function is as follows. Precursor of the transcription factor form (Processed sterol regulatory element-binding protein 1), which is embedded in the endoplasmic reticulum membrane. Low sterol concentrations promote processing of this form, releasing the transcription factor form that translocates into the nucleus and activates transcription of genes involved in cholesterol biosynthesis and lipid homeostasis. Functionally, key transcription factor that regulates expression of genes involved in cholesterol biosynthesis and lipid homeostasis. Binds to the sterol regulatory element 1 (SRE-1) (5'-ATCACCCCAC-3'). Has dual sequence specificity binding to both an E-box motif (5'-ATCACGTGA-3') and to SRE-1 (5'-ATCACCCCAC-3'). Regulates the promoters of genes involved in cholesterol biosynthesis and the LDL receptor (LDLR) pathway of sterol regulation. This chain is Sterol regulatory element-binding protein 1, found in Cricetulus griseus (Chinese hamster).